Reading from the N-terminus, the 933-residue chain is Serine/threonine-protein kinase PknD (933 aa).

Residues 4–291 (YDIIRMIGKG…ELKDDIEQHL (288 aa)) form the Protein kinase domain. ATP-binding positions include 10–18 (IGKGGMGEV) and lysine 33. Aspartate 138 (proton acceptor) is an active-site residue.

It belongs to the protein kinase superfamily. Ser/Thr protein kinase family. In terms of processing, autophosphorylated on serine and threonine residues.

The enzyme catalyses L-seryl-[protein] + ATP = O-phospho-L-seryl-[protein] + ADP + H(+). The catalysed reaction is L-threonyl-[protein] + ATP = O-phospho-L-threonyl-[protein] + ADP + H(+). Functionally, together with the serine/threonine kinase Pkn1, may play a role in the specific interactions with host proteins during intracellular growth. This is Serine/threonine-protein kinase PknD from Chlamydia felis (strain Fe/C-56) (Chlamydophila felis).